Consider the following 54-residue polypeptide: 2-aminomuconate deaminase (54 aa).

Homohexamer.

It carries out the reaction (2Z,4E)-2-aminomuconate + H2O = (3E)-2-oxohex-3-enedioate + NH4(+). Its pathway is xenobiotic degradation; nitrobenzene degradation. Converts 2-aminomuconate to 4-oxalocrotonate, an intermediate step in the biodegradation of nitrobenzene. The polypeptide is 2-aminomuconate deaminase (Ectopseudomonas oleovorans (Pseudomonas oleovorans)).